Consider the following 842-residue polypeptide: MSNILRKVIENDKGELRKLEKIAKKVESYADYMESLSDKDLQAKTPEFKQRYQNGETLEQLLPEAFAVVREAARRVLGLYPYRVQIMGGVVLHNGDVPEMRTGEGKTLTATMPVYLNALAGEGVHVITVNEYLSTRDATEMGEVYSWLGLSVGINLAAKSPAEKREAYLCDITYSTNSEVGFDYLRDNMVVRQEDMVQRPLNFALVDEVDSVLIDEARTPLIVSGAVSSETNQLYIRADMFVKTLDSVDYIIDVPTKTIGLSDSGIDKAESYFNLSNLYDIENVALTHFVDNALRANYIMLLDIDYVVSEEGEILIVDQFTGRTMEGRRFSDGLHQAIEAKEGVRIQEESKTSASITYQNMFRMYKKLAGMTGTAKTEEEEFREVYNMRIIPIPTNRPIARIDHTDLLYATLNSKFKAVVADVKARYEKGQPVLVGTVAVETSDLISKKLVEAGIPHEVLNAKNHFKEAQIIMNAGQRGAVTIATNMAGRGTDIKLGEGVRELGGLCVIGTERHESRRIDNQLRGRSGRQGDPGESQFYLSLEDELMRRFGTDRIKAFLDRMNNDDEDIVIKSRMLSRQVESAQKRVEGNNYDTRKQVLQYDDVMREQREIIYANRRDVITANRDLGPEIKAMIKRTIDRAVDAHSRTNRKDAIDAIVTFARTSIVPEETIGAKELRGLKDDQIKDKLYQRALEIYDKQLSKLRDQDAILEFQKVLILMIVDNKWTEHIDALDQLRNAVGLRGYAQNNPVVEYQSEGFKMFQDMIGAIEFDVTRTMMKAQIHEQERERAIQYATTTAAQNIQSQAIGADFDSSADFSRVERNDACPCHSGKKFKNCHGRKAF.

Residues Q85, 103 to 107 (GEGKT), and D493 each bind ATP. Residues C825, C827, C836, and H837 each coordinate Zn(2+).

Belongs to the SecA family. Monomer and homodimer. Part of the essential Sec protein translocation apparatus which comprises SecA, SecYEG and auxiliary proteins SecDF. Other proteins may also be involved. The cofactor is Zn(2+).

It is found in the cell membrane. Its subcellular location is the cytoplasm. It catalyses the reaction ATP + H2O + cellular proteinSide 1 = ADP + phosphate + cellular proteinSide 2.. In terms of biological role, part of the Sec protein translocase complex. Interacts with the SecYEG preprotein conducting channel. Has a central role in coupling the hydrolysis of ATP to the transfer of proteins into and across the cell membrane, serving as an ATP-driven molecular motor driving the stepwise translocation of polypeptide chains across the membrane. The chain is Protein translocase subunit SecA from Streptococcus equi subsp. equi (strain 4047).